The sequence spans 188 residues: Inosine triphosphate pyrophosphatase (188 aa).

9–14 (TGNAKK) is an ITP binding site. Position 39 (glutamate 39) interacts with Mg(2+). Residues lysine 51, 67-68 (DT), lysine 84, 143-146 (FGWD), lysine 166, and 171-172 (HR) each bind ITP.

The protein belongs to the HAM1 NTPase family. Homodimer. The cofactor is Mg(2+). Mn(2+) serves as cofactor.

The protein localises to the cytoplasm. It catalyses the reaction ITP + H2O = IMP + diphosphate + H(+). The enzyme catalyses dITP + H2O = dIMP + diphosphate + H(+). It carries out the reaction XTP + H2O = XMP + diphosphate + H(+). Pyrophosphatase that hydrolyzes non-canonical purine nucleotides such as inosine triphosphate (ITP), deoxyinosine triphosphate (dITP) or xanthosine 5'-triphosphate (XTP) to their respective monophosphate derivatives. The enzyme does not distinguish between the deoxy- and ribose forms. Probably excludes non-canonical purines from RNA and DNA precursor pools, thus preventing their incorporation into RNA and DNA and avoiding chromosomal lesions. The sequence is that of Inosine triphosphate pyrophosphatase from Anopheles gambiae (African malaria mosquito).